The primary structure comprises 213 residues: Penicillin-binding protein activator LpoB (213 aa).

The N-terminal stretch at 1-19 (MMKMNRYALVAALAIFLSG) is a signal peptide. The N-palmitoyl cysteine moiety is linked to residue Cys20. The S-diacylglycerol cysteine moiety is linked to residue Cys20. The tract at residues 26 to 71 (PAPVDEVKPAPEQPAEPQQPVPVVPSVPTIPQQPGPIEHEDQTAQP) is disordered. Pro residues predominate over residues 36 to 50 (PEQPAEPQQPVPVVP).

Belongs to the LpoB family. Interacts with PBP1b.

The protein resides in the cell outer membrane. Functionally, regulator of peptidoglycan synthesis that is essential for the function of penicillin-binding protein 1B (PBP1b). The polypeptide is Penicillin-binding protein activator LpoB (Citrobacter koseri (strain ATCC BAA-895 / CDC 4225-83 / SGSC4696)).